A 234-amino-acid chain; its full sequence is Glucosamine-6-phosphate deaminase (234 aa).

Residue Asp62 is the Proton acceptor; for enolization step of the active site. Catalysis depends on Asn128, which acts as the For ring-opening step. His130 serves as the catalytic Proton acceptor; for ring-opening step. Residue Glu135 is the For ring-opening step of the active site.

Belongs to the glucosamine/galactosamine-6-phosphate isomerase family. NagB subfamily.

The catalysed reaction is alpha-D-glucosamine 6-phosphate + H2O = beta-D-fructose 6-phosphate + NH4(+). The protein operates within amino-sugar metabolism; N-acetylneuraminate degradation; D-fructose 6-phosphate from N-acetylneuraminate: step 5/5. Catalyzes the reversible isomerization-deamination of glucosamine 6-phosphate (GlcN6P) to form fructose 6-phosphate (Fru6P) and ammonium ion. The polypeptide is Glucosamine-6-phosphate deaminase (Streptococcus equi subsp. zooepidemicus (strain MGCS10565)).